A 1216-amino-acid polypeptide reads, in one-letter code: ATP-dependent helicase/nuclease subunit A (1216 aa).

A UvrD-like helicase ATP-binding domain is found at 26–488 (QKKTAEQIEA…ILLKENFRSS (463 aa)). 47-54 (ASAGSGKT) is a binding site for ATP. The UvrD-like helicase C-terminal domain occupies 515–802 (KHQLVFANTK…ELMTIHKSKG (288 aa)).

It belongs to the helicase family. AddA subfamily. As to quaternary structure, heterodimer of AddA and AddB/RexB. Mg(2+) serves as cofactor.

The enzyme catalyses Couples ATP hydrolysis with the unwinding of duplex DNA by translocating in the 3'-5' direction.. The catalysed reaction is ATP + H2O = ADP + phosphate + H(+). Its function is as follows. The heterodimer acts as both an ATP-dependent DNA helicase and an ATP-dependent, dual-direction single-stranded exonuclease. Recognizes the chi site generating a DNA molecule suitable for the initiation of homologous recombination. The AddA nuclease domain is required for chi fragment generation; this subunit has the helicase and 3' -&gt; 5' nuclease activities. This Streptococcus pneumoniae (strain CGSP14) protein is ATP-dependent helicase/nuclease subunit A.